A 496-amino-acid polypeptide reads, in one-letter code: Tyrosine-protein kinase Srms (496 aa).

The 62-residue stretch at 55–116 (PRARLFRALY…PVTYLAKATP (62 aa)) folds into the SH3 domain. Residues 124 to 216 (WYFSGISRAQ…LIQNPLLQPC (93 aa)) form the SH2 domain. One can recognise a Protein kinase domain in the interval 234-495 (FVLRRKLGEG…AINRRLHLGL (262 aa)). Residues 240–248 (LGEGFFGEV) and K262 contribute to the ATP site. Residue D354 is the Proton acceptor of the active site. The residue at position 384 (Y384) is a Phosphotyrosine; by autocatalysis.

The protein belongs to the protein kinase superfamily. Tyr protein kinase family. SRC subfamily. Interacts (via the SH2 and SH3 domains) with DOK1. Interacts with KHDRBS1/SAM68 and VIM. Higher expression in liver, lung, thymus and skin than in brain, kidney, heart and spleen. In skin, highly expressed in keratinocytes. Abundant in lung, liver, spleen, kidney and testis and is also detected in the cerebrum.

Its subcellular location is the cytoplasm. The enzyme catalyses L-tyrosyl-[protein] + ATP = O-phospho-L-tyrosyl-[protein] + ADP + H(+). Its function is as follows. Non-receptor tyrosine-protein kinase which phosphorylates DOK1 on tyrosine residues. Also phosphorylates KHDRBS1/SAM68 and VIM on tyrosine residues. Phosphorylation of KHDRBS1 is EGF-dependent. Phosphorylates OTUB1, promoting deubiquitination of RPTOR. The protein is Tyrosine-protein kinase Srms (Srms) of Mus musculus (Mouse).